The sequence spans 454 residues: Probable glycine dehydrogenase (decarboxylating) subunit 1 (454 aa).

The protein belongs to the GcvP family. N-terminal subunit subfamily. The glycine cleavage system is composed of four proteins: P, T, L and H. In this organism, the P 'protein' is a heterodimer of two subunits.

It carries out the reaction N(6)-[(R)-lipoyl]-L-lysyl-[glycine-cleavage complex H protein] + glycine + H(+) = N(6)-[(R)-S(8)-aminomethyldihydrolipoyl]-L-lysyl-[glycine-cleavage complex H protein] + CO2. Its function is as follows. The glycine cleavage system catalyzes the degradation of glycine. The P protein binds the alpha-amino group of glycine through its pyridoxal phosphate cofactor; CO(2) is released and the remaining methylamine moiety is then transferred to the lipoamide cofactor of the H protein. The polypeptide is Probable glycine dehydrogenase (decarboxylating) subunit 1 (Sorangium cellulosum (strain So ce56) (Polyangium cellulosum (strain So ce56))).